A 241-amino-acid chain; its full sequence is Ribonuclease PH (241 aa).

Phosphate-binding positions include Arg89 and 127–129 (GTR).

The protein belongs to the RNase PH family. As to quaternary structure, homohexameric ring arranged as a trimer of dimers.

It catalyses the reaction tRNA(n+1) + phosphate = tRNA(n) + a ribonucleoside 5'-diphosphate. Phosphorolytic 3'-5' exoribonuclease that plays an important role in tRNA 3'-end maturation. Removes nucleotide residues following the 3'-CCA terminus of tRNAs; can also add nucleotides to the ends of RNA molecules by using nucleoside diphosphates as substrates, but this may not be physiologically important. Probably plays a role in initiation of 16S rRNA degradation (leading to ribosome degradation) during starvation. The sequence is that of Ribonuclease PH from Xanthomonas axonopodis pv. citri (strain 306).